A 360-amino-acid polypeptide reads, in one-letter code: Protein RecA (360 aa).

Residue 77–84 (GPESSGKT) coordinates ATP.

This sequence belongs to the RecA family.

It is found in the cytoplasm. In terms of biological role, can catalyze the hydrolysis of ATP in the presence of single-stranded DNA, the ATP-dependent uptake of single-stranded DNA by duplex DNA, and the ATP-dependent hybridization of homologous single-stranded DNAs. It interacts with LexA causing its activation and leading to its autocatalytic cleavage. The sequence is that of Protein RecA from Chelativorans sp. (strain BNC1).